A 611-amino-acid chain; its full sequence is Chaperone protein DnaK (611 aa).

T172 carries the post-translational modification Phosphothreonine; by autocatalysis. Residues 575–611 are disordered; sequence AAQAAQAQQDGGNESADKQDDNVVDADYEEVNDDDKK. A compositionally biased stretch (acidic residues) spans 596–611; that stretch reads NVVDADYEEVNDDDKK.

This sequence belongs to the heat shock protein 70 family.

Acts as a chaperone. In Shouchella clausii (strain KSM-K16) (Alkalihalobacillus clausii), this protein is Chaperone protein DnaK.